The primary structure comprises 89 residues: Phosphoribulokinase, chloroplastic (89 aa).

The disordered stretch occupies residues Leu-1–Leu-22.

This sequence belongs to the phosphoribulokinase family.

It localises to the plastid. Its subcellular location is the chloroplast. The catalysed reaction is D-ribulose 5-phosphate + ATP = D-ribulose 1,5-bisphosphate + ADP + H(+). The protein operates within carbohydrate biosynthesis; Calvin cycle. With respect to regulation, light regulated via thioredoxin by reversible oxidation/reduction of sulfhydryl/disulfide groups. The sequence is that of Phosphoribulokinase, chloroplastic from Vitis sp. (Grape).